The sequence spans 320 residues: MVSRTERKQHKKRRKWPFWLGGILLVLLLLISGGIFLIYNQVGAVVDTMHSPLSRDSDPDRQKEINQLYKEKDAVNILLLGVDERDGDLGRSDTMILLSINPNTDKMIMLSIPRDTYVNIPGRGMDKINHAYPFGIVDGVGGPDLSVQTVEETFNLSIHSYIRVNMEGFQQGIDAVGGVTVNNAQAFSTGGYNFDQGQITLDGKQALEFIRMRKQDSRGDLGRNDRQRQVIQAAMNEAASFSSITKAGEILDILGNNVQTDLDMDKLQTLLTNYAGARNNITTMEIEGHGETINGIWYYIVSDEEINRVNSEITGHMQEQ.

Topologically, residues 1 to 15 (MVSRTERKQHKKRRK) are cytoplasmic. A helical; Signal-anchor for type II membrane protein membrane pass occupies residues 16-36 (WPFWLGGILLVLLLLISGGIF). Topologically, residues 37 to 320 (LIYNQVGAVV…SEITGHMQEQ (284 aa)) are extracellular.

The protein belongs to the LytR/CpsA/Psr (LCP) family.

The protein localises to the cell membrane. Its pathway is cell wall biogenesis. In terms of biological role, may catalyze the final step in cell wall teichoic acid biosynthesis, the transfer of the anionic cell wall polymers (APs) from their lipid-linked precursor to the cell wall peptidoglycan (PG). The polypeptide is Polyisoprenyl-teichoic acid--peptidoglycan teichoic acid transferase TagU (Oceanobacillus iheyensis (strain DSM 14371 / CIP 107618 / JCM 11309 / KCTC 3954 / HTE831)).